The primary structure comprises 468 residues: ATP synthase subunit beta (468 aa).

Residue 155–162 participates in ATP binding; sequence GGAGVGKT.

This sequence belongs to the ATPase alpha/beta chains family. In terms of assembly, F-type ATPases have 2 components, CF(1) - the catalytic core - and CF(0) - the membrane proton channel. CF(1) has five subunits: alpha(3), beta(3), gamma(1), delta(1), epsilon(1). CF(0) has three main subunits: a(1), b(2) and c(9-12). The alpha and beta chains form an alternating ring which encloses part of the gamma chain. CF(1) is attached to CF(0) by a central stalk formed by the gamma and epsilon chains, while a peripheral stalk is formed by the delta and b chains.

It is found in the cell membrane. The enzyme catalyses ATP + H2O + 4 H(+)(in) = ADP + phosphate + 5 H(+)(out). Its function is as follows. Produces ATP from ADP in the presence of a proton gradient across the membrane. The catalytic sites are hosted primarily by the beta subunits. The polypeptide is ATP synthase subunit beta (Streptococcus pyogenes serotype M49 (strain NZ131)).